We begin with the raw amino-acid sequence, 392 residues long: Stilbene synthase 4 (392 aa).

55–58 (KFNR) contacts substrate. The active site involves C164. Residues L267 and 305-307 (GGP) each bind substrate.

It belongs to the thiolase-like superfamily. Chalcone/stilbene synthases family. As to quaternary structure, homodimer.

Its subcellular location is the cytoplasm. The catalysed reaction is 4-coumaroyl-CoA + 3 malonyl-CoA + 3 H(+) = trans-resveratrol + 4 CO2 + 4 CoA. It participates in phytoalexin biosynthesis; 3,4',5-trihydroxystilbene biosynthesis; 3,4',5-trihydroxystilbene from trans-4-coumarate: step 2/2. Mediates resistance to pathogens which are sensitive to stilbenes. The sequence is that of Stilbene synthase 4 from Vitis vinifera (Grape).